A 121-amino-acid chain; its full sequence is Large ribosomal subunit protein uL18 (121 aa).

It belongs to the universal ribosomal protein uL18 family. Part of the 50S ribosomal subunit; part of the 5S rRNA/L5/L18/L25 subcomplex. Contacts the 5S and 23S rRNAs.

This is one of the proteins that bind and probably mediate the attachment of the 5S RNA into the large ribosomal subunit, where it forms part of the central protuberance. This chain is Large ribosomal subunit protein uL18, found in Moorella thermoacetica (strain ATCC 39073 / JCM 9320).